A 173-amino-acid chain; its full sequence is Adenine phosphoribosyltransferase (173 aa).

It belongs to the purine/pyrimidine phosphoribosyltransferase family. Homodimer.

The protein resides in the cytoplasm. The catalysed reaction is AMP + diphosphate = 5-phospho-alpha-D-ribose 1-diphosphate + adenine. The protein operates within purine metabolism; AMP biosynthesis via salvage pathway; AMP from adenine: step 1/1. In terms of biological role, catalyzes a salvage reaction resulting in the formation of AMP, that is energically less costly than de novo synthesis. The polypeptide is Adenine phosphoribosyltransferase (Ureaplasma parvum serovar 3 (strain ATCC 27815 / 27 / NCTC 11736)).